The chain runs to 275 residues: Phosphate import ATP-binding protein PstB 1 (275 aa).

The 240-residue stretch at 22–261 (IETRDLSVYY…DRTEKIFNSP (240 aa)) folds into the ABC transporter domain. Residue 54–61 (GPSGCGKS) participates in ATP binding.

Belongs to the ABC transporter superfamily. Phosphate importer (TC 3.A.1.7) family. The complex is composed of two ATP-binding proteins (PstB), two transmembrane proteins (PstC and PstA) and a solute-binding protein (PstS).

The protein resides in the cell inner membrane. The catalysed reaction is phosphate(out) + ATP + H2O = ADP + 2 phosphate(in) + H(+). Part of the ABC transporter complex PstSACB involved in phosphate import. Responsible for energy coupling to the transport system. This Synechococcus sp. (strain JA-3-3Ab) (Cyanobacteria bacterium Yellowstone A-Prime) protein is Phosphate import ATP-binding protein PstB 1.